Here is a 39-residue protein sequence, read N- to C-terminus: TTLTEPEPDLTYLTFVXIVXXEMPIFVMATANSGITSTF.

A divalent metal cation is required as a cofactor. As to expression, expressed mainly in the posterior salivary glands and, to a lesser extent, in the anterior salivary glands and secreted into the proboscis (at protein level).

It localises to the secreted. Inhibited by EDTA, cysteine, DTT and sodium phosphate. Partially inhibited by EGTA, citrate, Tris and glycine. Not inhibited by DFP, PMSF, iodoacetic acid and leupeptin. Requires sodium chloride concentrations higher than 0.15 M for activity. In terms of biological role, metalloprotease with anticoagulant activity. Cleaves fibrinogen Aalpha (FGA), gamma (FGG) and Bbeta (FGB) chains after positions 'Asn-121', 'Lys-160' and 'Pro-102', respectively. Breaks down cross-linked and non-cross-linked fibrin clots. Prevents and reverts platelet aggregation induced by ADP and collagen. Prevents thrombin-induced platelet clotting. Does not affect plasma levels of coagulation factors prothrombin (F2), V (F5), VII (F7), VIII (F8), IX (F9), X (F10), XI (F11), XII (F12), plasma kallikrein (KLKB1) and kininogen-1 (KNG1). The protein is Hementin of Haementeria ghilianii (Amazon leech).